A 1475-amino-acid chain; its full sequence is Mediator of RNA polymerase II transcription subunit 1.1 (1475 aa).

Disordered regions lie at residues 579–600 (STIG…LTSM), 645–894 (GLAS…KMRE), and 908–1475 (PDVE…IDDE). Positions 655–666 (PVAAAAAAPGGP) are enriched in low complexity. The segment covering 755–766 (QRSSSEQHNPNP) has biased composition (polar residues). The segment covering 767-800 (HQMSQYQMQQYQQNQQFRMHQMQQQQQQQFQMQS) has biased composition (low complexity). The segment covering 810 to 819 (TDEDSDEECD) has biased composition (acidic residues). Over residues 829–838 (STSSRMSSVP) the composition is skewed to low complexity. Residues 869 to 880 (TPSPLSAPPKPF) show a composition bias toward pro residues. Over residues 915–929 (QQLSSSSSSSQAEAS) the composition is skewed to low complexity. Residues 941–952 (PPKPSSSSAPPP) show a composition bias toward pro residues. Low complexity-rich tracts occupy residues 969–989 (QQEQ…SELA) and 1037–1049 (QKPT…STSS). Composition is skewed to basic and acidic residues over residues 1052–1070 (PPKK…EKLI), 1080–1148 (VVDD…EKEP), and 1155–1180 (EKKD…KEYS). The stretch at 1098-1135 (DRDRDEDREKVRDKEDKAQREKDKKEKERERRRQRDRD) forms a coiled coil. A compositionally biased stretch (polar residues) spans 1181–1193 (KASTTSLIPTLSL). Residues 1199–1215 (PKKDTVEEEKKDVKEEA) are compositionally biased toward basic and acidic residues. Positions 1242 to 1252 (APVAPAVQQQQ) are enriched in low complexity. Over residues 1281–1291 (PLQPPPPPQMT) the composition is skewed to pro residues. Residues 1308 to 1317 (PGSSRPSGNR) are compositionally biased toward polar residues. Pro residues-rich tracts occupy residues 1320–1334 (PLPP…PPPD) and 1425–1440 (PPAP…PKDP).

It belongs to the Mediator complex subunit 1 family. Component of the Mediator complex.

Its subcellular location is the nucleus. Component of the Mediator complex, a coactivator involved in the regulated transcription of nearly all RNA polymerase II-dependent genes. Mediator functions as a bridge to convey information from gene-specific regulatory proteins to the basal RNA polymerase II transcription machinery. Mediator is recruited to promoters by direct interactions with regulatory proteins and serves as a scaffold for the assembly of a functional preinitiation complex with RNA polymerase II and the general transcription factors. This Caenorhabditis elegans protein is Mediator of RNA polymerase II transcription subunit 1.1 (sop-3).